The following is a 402-amino-acid chain: Tumor necrosis factor receptor superfamily member 11B (402 aa).

The N-terminal stretch at 1–21 is a signal peptide; it reads MNKLLCCALVFLDISIKWTTQ. 4 TNFR-Cys repeats span residues 24 to 62, 64 to 105, 106 to 142, and 144 to 185; these read FPPK…KTVC, PCPD…NRVC, ECEE…NTVC, and RCPD…DNIC. Disulfide bonds link cysteine 41–cysteine 54, cysteine 44–cysteine 62, cysteine 65–cysteine 80, cysteine 83–cysteine 97, cysteine 87–cysteine 105, cysteine 107–cysteine 118, cysteine 124–cysteine 142, and cysteine 145–cysteine 160. Residues asparagine 165 and asparagine 178 are each glycosylated (N-linked (GlcNAc...) asparagine). The cysteines at positions 166 and 185 are disulfide-linked. 2 consecutive Death domains span residues 198-269 and 270-365; these read IDMT…DMVK and KIIQ…VIQS.

In terms of assembly, homodimer. Interacts with TNFSF10 and TNFSF11. In terms of processing, N-glycosylated. Contains sialic acid residues.

The protein resides in the secreted. Its function is as follows. Acts as a decoy receptor for TNFSF11/RANKL and thereby neutralizes its function in osteoclastogenesis. Inhibits the activation of osteoclasts and promotes osteoclast apoptosis. Bone homeostasis seems to depend on the local ratio between TNFSF11 and TNFRSF11B. May also play a role in preventing arterial calcification. May act as decoy receptor for TNFSF10/TRAIL and protect against apoptosis. TNFSF10/TRAIL binding blocks the inhibition of osteoclastogenesis. In Bos taurus (Bovine), this protein is Tumor necrosis factor receptor superfamily member 11B (TNFRSF11B).